Consider the following 198-residue polypeptide: FMN-dependent NADH:quinone oxidoreductase (198 aa).

FMN is bound at residue 96–99 (MYNF).

Belongs to the azoreductase type 1 family. As to quaternary structure, homodimer. It depends on FMN as a cofactor.

It catalyses the reaction 2 a quinone + NADH + H(+) = 2 a 1,4-benzosemiquinone + NAD(+). The catalysed reaction is N,N-dimethyl-1,4-phenylenediamine + anthranilate + 2 NAD(+) = 2-(4-dimethylaminophenyl)diazenylbenzoate + 2 NADH + 2 H(+). In terms of biological role, quinone reductase that provides resistance to thiol-specific stress caused by electrophilic quinones. Also exhibits azoreductase activity. Catalyzes the reductive cleavage of the azo bond in aromatic azo compounds to the corresponding amines. The protein is FMN-dependent NADH:quinone oxidoreductase of Burkholderia thailandensis (strain ATCC 700388 / DSM 13276 / CCUG 48851 / CIP 106301 / E264).